Here is a 312-residue protein sequence, read N- to C-terminus: Ribose-phosphate pyrophosphokinase (312 aa).

Residues 34-36 (DGE) and 93-94 (RQ) contribute to the ATP site. 2 residues coordinate Mg(2+): His128 and Asp167. Lys191 is an active-site residue. Positions 193 and 217 each coordinate D-ribose 5-phosphate.

It belongs to the ribose-phosphate pyrophosphokinase family. Class I subfamily. As to quaternary structure, homohexamer. It depends on Mg(2+) as a cofactor.

The protein resides in the cytoplasm. It catalyses the reaction D-ribose 5-phosphate + ATP = 5-phospho-alpha-D-ribose 1-diphosphate + AMP + H(+). Its pathway is metabolic intermediate biosynthesis; 5-phospho-alpha-D-ribose 1-diphosphate biosynthesis; 5-phospho-alpha-D-ribose 1-diphosphate from D-ribose 5-phosphate (route I): step 1/1. Its function is as follows. Involved in the biosynthesis of the central metabolite phospho-alpha-D-ribosyl-1-pyrophosphate (PRPP) via the transfer of pyrophosphoryl group from ATP to 1-hydroxyl of ribose-5-phosphate (Rib-5-P). The polypeptide is Ribose-phosphate pyrophosphokinase (Baumannia cicadellinicola subsp. Homalodisca coagulata).